Consider the following 520-residue polypeptide: Probable protein phosphatase 2C 39 (520 aa).

The region spanning 160–507 is the PPM-type phosphatase domain; the sequence is FLTSTEIKMA…DDVTIIVIIL (348 aa). Residues Asp195, Gly196, Asp435, and Asp498 each coordinate Mn(2+).

It belongs to the PP2C family. Mg(2+) serves as cofactor. Requires Mn(2+) as cofactor.

It carries out the reaction O-phospho-L-seryl-[protein] + H2O = L-seryl-[protein] + phosphate. The enzyme catalyses O-phospho-L-threonyl-[protein] + H2O = L-threonyl-[protein] + phosphate. The chain is Probable protein phosphatase 2C 39 from Oryza sativa subsp. japonica (Rice).